Here is a 464-residue protein sequence, read N- to C-terminus: MRIKIKDILISSKDVKFVGNIKNIERVVSFYSLDSREIKDDNINDSLYFAYKGNKVDGFSFVKYLIDLGVKCFACSREHESECIKYLNDNEGLVFLLTSNVIKLLQALASFLIEKTSFKRIAITGSNGKTTTKEMLYSILSKKYKTYKTWGNLNSDIGLPLSILRVEGNEEYAVFEVGVSYVGEMDLLSQILKPEIVIITNISYAHMQAFKELQAIAFEKSKIIGKNIEIFVVNEMNDYCVYLEKRAKIANPNVKIVYFDFENLSIKSFSFLDGKFSFDFVYKGFEYSILLLGRHNIFNAIGCINLALFLGMREKEIKEGLIETAFQKGRAEILTKNGYLILNDSYNGNMGSFMALKNMILDLNIQNKKFIVLGSFKELGELAYKTHKDLIQEAISMNFDKIFLIGEEFLDVRDSENLVEKCLYYFSEFDKFIDFFLKSLEPSVFIVIKGSRFNRLERILNIFR.

Residue 125–131 (GSNGKTT) coordinates ATP.

The protein belongs to the MurCDEF family. MurF subfamily.

It localises to the cytoplasm. It carries out the reaction D-alanyl-D-alanine + UDP-N-acetyl-alpha-D-muramoyl-L-alanyl-gamma-D-glutamyl-meso-2,6-diaminopimelate + ATP = UDP-N-acetyl-alpha-D-muramoyl-L-alanyl-gamma-D-glutamyl-meso-2,6-diaminopimeloyl-D-alanyl-D-alanine + ADP + phosphate + H(+). The protein operates within cell wall biogenesis; peptidoglycan biosynthesis. Functionally, involved in cell wall formation. Catalyzes the final step in the synthesis of UDP-N-acetylmuramoyl-pentapeptide, the precursor of murein. The polypeptide is UDP-N-acetylmuramoyl-tripeptide--D-alanyl-D-alanine ligase (Borreliella burgdorferi (strain ATCC 35210 / DSM 4680 / CIP 102532 / B31) (Borrelia burgdorferi)).